A 579-amino-acid chain; its full sequence is Tricyclene synthase 0e23, chloroplastic (579 aa).

Residues 1-66 constitute a chloroplast transit peptide; sequence MAFCISYLGA…ALCLNAHSTS (66 aa). N-linked (GlcNAc...) asparagine glycans are attached at residues Asn27, Asn204, and Asn317. The Mg(2+) site is built by Asp336 and Asp340. The DDXXD motif signature appears at 336-340; it reads DDIFD. N-linked (GlcNAc...) asparagine glycosylation is found at Asn382 and Asn463. Asn480 and Glu488 together coordinate Mg(2+). Asn507 carries an N-linked (GlcNAc...) asparagine glycan.

It belongs to the terpene synthase family. Tpsg subfamily. The cofactor is Mg(2+). Mn(2+) serves as cofactor. As to expression, accumulates in flowers; mostly expressed in both upper and lower petal lobes, and, to a lower extent, in tube and stamens.

It is found in the plastid. The protein resides in the chloroplast stroma. It catalyses the reaction (2E)-geranyl diphosphate = tricyclene + diphosphate. It carries out the reaction (2E)-geranyl diphosphate = (E)-beta-ocimene + diphosphate. The protein operates within secondary metabolite biosynthesis; terpenoid biosynthesis. Contributes to floral scent emission. In Antirrhinum majus (Garden snapdragon), this protein is Tricyclene synthase 0e23, chloroplastic (0e23).